Consider the following 89-residue polypeptide: Small ribosomal subunit protein uS15 (89 aa).

It belongs to the universal ribosomal protein uS15 family. In terms of assembly, part of the 30S ribosomal subunit. Forms a bridge to the 50S subunit in the 70S ribosome, contacting the 23S rRNA.

Its function is as follows. One of the primary rRNA binding proteins, it binds directly to 16S rRNA where it helps nucleate assembly of the platform of the 30S subunit by binding and bridging several RNA helices of the 16S rRNA. Forms an intersubunit bridge (bridge B4) with the 23S rRNA of the 50S subunit in the ribosome. This is Small ribosomal subunit protein uS15 from Rhodospirillum centenum (strain ATCC 51521 / SW).